Consider the following 384-residue polypeptide: Chaperone protein DnaJ (384 aa).

In terms of domain architecture, J spans 5 to 69 (DYYKVLGVDR…QKRAQYDQFG (65 aa)). Residues 141–223 (GKKTQVSYTR…CGGKGTVERK (83 aa)) form a CR-type zinc finger. Zn(2+) is bound by residues Cys-154, Cys-157, Cys-171, Cys-174, Cys-197, Cys-200, Cys-211, and Cys-214. 4 CXXCXGXG motif repeats span residues 154–161 (CETCGGNG), 171–178 (CDKCHGTG), 197–204 (CDKCNGRG), and 211–218 (CKTCGGKG).

It belongs to the DnaJ family. In terms of assembly, homodimer. Zn(2+) is required as a cofactor.

It is found in the cytoplasm. Participates actively in the response to hyperosmotic and heat shock by preventing the aggregation of stress-denatured proteins and by disaggregating proteins, also in an autonomous, DnaK-independent fashion. Unfolded proteins bind initially to DnaJ; upon interaction with the DnaJ-bound protein, DnaK hydrolyzes its bound ATP, resulting in the formation of a stable complex. GrpE releases ADP from DnaK; ATP binding to DnaK triggers the release of the substrate protein, thus completing the reaction cycle. Several rounds of ATP-dependent interactions between DnaJ, DnaK and GrpE are required for fully efficient folding. Also involved, together with DnaK and GrpE, in the DNA replication of plasmids through activation of initiation proteins. In Lactobacillus acidophilus (strain ATCC 700396 / NCK56 / N2 / NCFM), this protein is Chaperone protein DnaJ.